The chain runs to 315 residues: tRNA dimethylallyltransferase (315 aa).

Residue 11–18 (GPTASGKS) coordinates ATP. 13-18 (TASGKS) serves as a coordination point for substrate. Interaction with substrate tRNA regions lie at residues 36 to 39 (DSMQ) and 160 to 164 (QRLIR).

Belongs to the IPP transferase family. Monomer. The cofactor is Mg(2+).

The catalysed reaction is adenosine(37) in tRNA + dimethylallyl diphosphate = N(6)-dimethylallyladenosine(37) in tRNA + diphosphate. Functionally, catalyzes the transfer of a dimethylallyl group onto the adenine at position 37 in tRNAs that read codons beginning with uridine, leading to the formation of N6-(dimethylallyl)adenosine (i(6)A). This chain is tRNA dimethylallyltransferase, found in Rickettsia bellii (strain RML369-C).